The following is a 187-amino-acid chain: uncharacterized protein (187 aa).

The region spanning 6–66 (TDLAEQIFSA…QFAHRVFSMF (61 aa)) is the HTH tetR-type domain. The segment at residues 29–48 (SMLKLAKEANVAAGTIYLYF) is a DNA-binding region (H-T-H motif).

This is an uncharacterized protein from Haemophilus influenzae (strain ATCC 51907 / DSM 11121 / KW20 / Rd).